Reading from the N-terminus, the 704-residue chain is Non-sulfated chondroitin lyase E66 (704 aa).

An N-terminal signal peptide occupies residues 1 to 23 (MSIVLIIVIVVIFLICFLYLSNS). Active-site proton acceptor residues include Asn-236 and His-291. Tyr-299 acts as the Proton donor in catalysis.

Belongs to the baculoviridae E66 family.

It is found in the virion membrane. The protein resides in the host nucleus. The protein localises to the host cytoplasm. Functionally, component of the polyhedra envelope. Plays an essential role in oral infectivity. May digest, with its chondroitin lyase activity, the chondroitin sulfate barrier of the peritrophic matrix of the host midgut to facilitate viral infection in the epithelial cells. The protein is Non-sulfated chondroitin lyase E66 (P79) of Lepidoptera (butterflies and moths).